The sequence spans 317 residues: Adenine deaminase (317 aa).

The Zn(2+) site is built by histidine 14, histidine 16, and histidine 194. The active-site Proton donor is the glutamate 197. Aspartate 275 is a Zn(2+) binding site. A substrate-binding site is contributed by aspartate 276.

The protein belongs to the metallo-dependent hydrolases superfamily. Adenosine and AMP deaminases family. Adenine deaminase type 2 subfamily. Requires Zn(2+) as cofactor.

The enzyme catalyses adenine + H2O + H(+) = hypoxanthine + NH4(+). In terms of biological role, catalyzes the hydrolytic deamination of adenine to hypoxanthine. Plays an important role in the purine salvage pathway and in nitrogen catabolism. This is Adenine deaminase from Bordetella bronchiseptica (strain ATCC BAA-588 / NCTC 13252 / RB50) (Alcaligenes bronchisepticus).